Here is a 313-residue protein sequence, read N- to C-terminus: MKGFNCNGQVILISGGSQGLGESFAKRFVQDDDGPGSNTNKVIIVSRSQSKLVKACERIGVDGVSLDRYVNDTNRNETKLIYHSCDTSSYDKVALMFKLLVKSELVPSQVYMCAGGSIPKLFLDLTPEELQNGITTNYSTAVNLAHVSLKHDVPHLLFFSSEVAFFPFIGYAQYAPLKQSIRSLVAILRQEHSSTRITCVYPGNFQSEGFDLENITKPAITKEIEGPSNPVTAAQCRDKIISSLKWGLDDITTDSIGWLLMACDQGLNKHSTSQFMFVFSWILGALLNITIVPIYMLICKFQIYQWKRNKDTK.

Residue leucine 12 coordinates NADP(+). NADPH is bound by residues glycine 15, serine 17, and glycine 19. Positions 15–19 match the GXSXG motif; it reads GGSQG. Leucine 20 serves as a coordination point for NADP(+). Arginine 47, lysine 51, and aspartate 86 together coordinate NADPH. Aspartate 86 contributes to the NADP(+) binding site. The active-site Proton donor is serine 160. Residues tyrosine 174, lysine 178, and serine 207 each contribute to the NADP(+) site. The active-site Proton acceptor is the tyrosine 174. Lysine 178 acts as the Lowers pKa of active site Tyr in catalysis. A helical transmembrane segment spans residues 278–298; the sequence is VFSWILGALLNITIVPIYMLI.

The protein belongs to the short-chain dehydrogenases/reductases (SDR) family.

Its subcellular location is the endoplasmic reticulum membrane. It catalyses the reaction sphinganine + NADP(+) = 3-oxosphinganine + NADPH + H(+). Its pathway is lipid metabolism; sphingolipid metabolism. Functionally, catalyzes the reduction of 3'-oxosphinganine (3-ketodihydrosphingosine/KDS) to sphinganine (dihydrosphingosine/DHS), the second step of de novo sphingolipid biosynthesis. The protein is 3-ketodihydrosphingosine reductase TSC10 (TSC10) of Kluyveromyces lactis (strain ATCC 8585 / CBS 2359 / DSM 70799 / NBRC 1267 / NRRL Y-1140 / WM37) (Yeast).